The chain runs to 416 residues: Serine hydroxymethyltransferase (416 aa).

(6S)-5,6,7,8-tetrahydrofolate-binding positions include Leu121 and 125 to 127; that span reads GHL. The residue at position 230 (Lys230) is an N6-(pyridoxal phosphate)lysine.

This sequence belongs to the SHMT family. As to quaternary structure, homodimer. Requires pyridoxal 5'-phosphate as cofactor.

The protein resides in the cytoplasm. It catalyses the reaction (6R)-5,10-methylene-5,6,7,8-tetrahydrofolate + glycine + H2O = (6S)-5,6,7,8-tetrahydrofolate + L-serine. It participates in one-carbon metabolism; tetrahydrofolate interconversion. It functions in the pathway amino-acid biosynthesis; glycine biosynthesis; glycine from L-serine: step 1/1. Its function is as follows. Catalyzes the reversible interconversion of serine and glycine with tetrahydrofolate (THF) serving as the one-carbon carrier. This reaction serves as the major source of one-carbon groups required for the biosynthesis of purines, thymidylate, methionine, and other important biomolecules. Also exhibits THF-independent aldolase activity toward beta-hydroxyamino acids, producing glycine and aldehydes, via a retro-aldol mechanism. The chain is Serine hydroxymethyltransferase from Nitrosomonas europaea (strain ATCC 19718 / CIP 103999 / KCTC 2705 / NBRC 14298).